A 390-amino-acid polypeptide reads, in one-letter code: Monomeric sarcosine oxidase (390 aa).

Residue D6 to F36 participates in FAD binding. C316 is modified (S-8alpha-FAD cysteine).

In terms of assembly, monomer. Requires FAD as cofactor.

Its subcellular location is the cytoplasm. It catalyses the reaction sarcosine + O2 + H2O = formaldehyde + glycine + H2O2. Its activity is regulated as follows. Pyrrole-2-carboxylate is a competitive inhibitor. N-(cyclopropyl)glycine (CPG) is a mechanism-based inhibitor and inactivates the enzyme by covalently modifying the flavin. Functionally, catalyzes the oxidative demethylation of sarcosine. Can also oxidize other secondary amino acids such as N-methyl-L-alanine. In Bacillus sp. (strain B-0618), this protein is Monomeric sarcosine oxidase (soxA).